The chain runs to 104 residues: Protein ArtA (104 aa).

This chain is Protein ArtA (artA), found in Escherichia coli (strain K12).